A 149-amino-acid polypeptide reads, in one-letter code: Endonuclease I (149 aa).

Homodimer.

The catalysed reaction is Endonucleolytic cleavage to 5'-phosphooligonucleotide end-products.. Junction-resolving enzyme that selectively binds and cleaves four-way (Holliday) DNA junctions present after viral genomic replication. These intermediates are created during DNA repair, processing of stalled replication forks and homologous genetic recombination. Introduces two nicks on the two non-crossing strands, at 5' sides of the junction. Also participates together with gp6 in the degradation of host chromosome to provide nucleotides for phage DNA synthesis. This chain is Endonuclease I, found in Escherichia coli (Bacteriophage T7).